Consider the following 709-residue polypeptide: DNA ligase (709 aa).

NAD(+)-binding positions include 34–38, 83–84, and Glu-115; these read DAEYD and SL. Catalysis depends on Lys-117, which acts as the N6-AMP-lysine intermediate. Arg-138, Glu-185, Lys-301, and Lys-325 together coordinate NAD(+). Residues Cys-419, Cys-422, Cys-437, and Cys-443 each contribute to the Zn(2+) site. Positions 602-691 constitute a BRCT domain; sequence RQSDTLAGKT…AEPPPSPPPP (90 aa). The tract at residues 679-709 is disordered; the sequence is GTTAEPPPSPPPPPPETNTDGNQLLLPLDGE. Residues 683 to 694 show a composition bias toward pro residues; it reads EPPPSPPPPPPE.

This sequence belongs to the NAD-dependent DNA ligase family. LigA subfamily. The cofactor is Mg(2+). Requires Mn(2+) as cofactor.

The enzyme catalyses NAD(+) + (deoxyribonucleotide)n-3'-hydroxyl + 5'-phospho-(deoxyribonucleotide)m = (deoxyribonucleotide)n+m + AMP + beta-nicotinamide D-nucleotide.. DNA ligase that catalyzes the formation of phosphodiester linkages between 5'-phosphoryl and 3'-hydroxyl groups in double-stranded DNA using NAD as a coenzyme and as the energy source for the reaction. It is essential for DNA replication and repair of damaged DNA. The chain is DNA ligase from Chloroflexus aurantiacus (strain ATCC 29364 / DSM 637 / Y-400-fl).